The following is a 276-amino-acid chain: Glutamate 5-kinase (276 aa).

Lys14 contacts ATP. Residues Ser54, Asp141, and Asn157 each coordinate substrate. Residues 177 to 178 and 219 to 225 contribute to the ATP site; these read SD and TGGMLTK.

This sequence belongs to the glutamate 5-kinase family.

The protein resides in the cytoplasm. The enzyme catalyses L-glutamate + ATP = L-glutamyl 5-phosphate + ADP. It functions in the pathway amino-acid biosynthesis; L-proline biosynthesis; L-glutamate 5-semialdehyde from L-glutamate: step 1/2. Functionally, catalyzes the transfer of a phosphate group to glutamate to form L-glutamate 5-phosphate. The sequence is that of Glutamate 5-kinase from Listeria monocytogenes serovar 1/2a (strain ATCC BAA-679 / EGD-e).